The chain runs to 301 residues: Small ribosomal subunit protein uS2 (301 aa).

The protein belongs to the universal ribosomal protein uS2 family.

The chain is Small ribosomal subunit protein uS2 from Acidobacterium capsulatum (strain ATCC 51196 / DSM 11244 / BCRC 80197 / JCM 7670 / NBRC 15755 / NCIMB 13165 / 161).